We begin with the raw amino-acid sequence, 240 residues long: Uridylate kinase (240 aa).

12–15 (KLSG) serves as a coordination point for ATP. An involved in allosteric activation by GTP region spans residues 20–25 (GDKGFG). G54 provides a ligand contact to UMP. ATP contacts are provided by G55 and R59. Residues D74 and 135 to 142 (TGSPYFST) contribute to the UMP site. Positions 163, 169, and 172 each coordinate ATP.

This sequence belongs to the UMP kinase family. In terms of assembly, homohexamer.

It localises to the cytoplasm. The catalysed reaction is UMP + ATP = UDP + ADP. Its pathway is pyrimidine metabolism; CTP biosynthesis via de novo pathway; UDP from UMP (UMPK route): step 1/1. Its activity is regulated as follows. Allosterically activated by GTP. Inhibited by UTP. Functionally, catalyzes the reversible phosphorylation of UMP to UDP. The polypeptide is Uridylate kinase (Limosilactobacillus reuteri (strain DSM 20016) (Lactobacillus reuteri)).